The primary structure comprises 329 residues: Vitamin B12 import system permease protein BtuC (329 aa).

A run of 9 helical transmembrane segments spans residues 18-38, 64-84, 91-111, 115-135, 149-169, 191-208, 243-263, 277-297, and 305-325; these read WLLS…CAGE, LAVL…QALF, PGLL…VLLG, LPGW…TLIL, LLAG…AIYF, WQQS…IWIC, GWMV…GLVI, VLLP…DVVA, and ELPI…WLLL.

It belongs to the binding-protein-dependent transport system permease family. FecCD subfamily. The complex is composed of two ATP-binding proteins (BtuD), two transmembrane proteins (BtuC) and a solute-binding protein (BtuF).

It is found in the cell inner membrane. Functionally, part of the ABC transporter complex BtuCDF involved in vitamin B12 import. Involved in the translocation of the substrate across the membrane. This is Vitamin B12 import system permease protein BtuC from Salmonella arizonae (strain ATCC BAA-731 / CDC346-86 / RSK2980).